A 348-amino-acid polypeptide reads, in one-letter code: Rhodopsin (348 aa).

The residue at position 1 (M1) is an N-acetylmethionine. At M1–Q36 the chain is on the extracellular side. 2 N-linked (GlcNAc...) asparagine glycosylation sites follow: N2 and N15. Residues F37 to V61 form a helical membrane-spanning segment. At T62–N73 the chain is on the cytoplasmic side. A helical transmembrane segment spans residues Y74–Y96. Over T97–C110 the chain is Extracellular. A disulfide bond links C110 and C187. The chain crosses the membrane as a helical span at residues N111–I133. The short motif at E134–Y136 is the 'Ionic lock' involved in activated form stabilization element. At E134–H152 the chain is on the cytoplasmic side. A helical membrane pass occupies residues A153–A173. At G174 to S202 the chain is on the extracellular side. E201 is a Zn(2+) binding site. The helical transmembrane segment at F203–G224 threads the bilayer. Residues Q225 to R252 lie on the Cytoplasmic side of the membrane. Residues M253–Y274 form a helical membrane-spanning segment. Over I275–G284 the chain is Extracellular. Q279 contributes to the Zn(2+) binding site. A helical membrane pass occupies residues P285–M309. The residue at position 296 (K296) is an N6-(retinylidene)lysine. The Cytoplasmic segment spans residues N310–A348. S-palmitoyl cysteine attachment occurs at residues C322 and C323. An interaction with SAG region spans residues D330–A348. S334 carries the post-translational modification Phosphoserine. At T336 the chain carries Phosphothreonine. A Phosphoserine modification is found at S338. Phosphothreonine occurs at positions 340 and 342. Residue S343 is modified to Phosphoserine.

The protein belongs to the G-protein coupled receptor 1 family. Opsin subfamily. In terms of assembly, homodimer. May form a complex composed of RHO, GRK1 and RCVRN in a Ca(2+)-dependent manner; RCVRN prevents the interaction between GRK1 and RHO. Interacts with GRK1. Interacts (phosphorylated form) with SAG. Interacts with GNAT1. Interacts with GNAT3. SAG and G-proteins compete for a common binding site. Interacts with PRCD; the interaction promotes PRCD stability. Forms a complex with ASAP1 and ARF4. Forms a complex with ASAP1, RAB11A, Rabin8/RAB3IP, ARF4 and RAB11FIP3; the complex regulates Golgi-to-cilia rhodopsin/RHO transport in photoreceptors. Phosphorylated on some or all of the serine and threonine residues present in the C-terminal region. After activation by light, phosphorylated by GRK1 (in vitro). Post-translationally, contains one covalently linked retinal chromophore. Upon light absorption, the covalently bound 11-cis-retinal is converted to all-trans-retinal. After hydrolysis of the Schiff base and release of the covalently bound all-trans-retinal, active rhodopsin is regenerated by binding of a fresh molecule of 11-cis-retinal. As to expression, rod shaped photoreceptor cells which mediate vision in dim light.

It localises to the membrane. It is found in the cell projection. The protein resides in the cilium. The protein localises to the photoreceptor outer segment. Photoreceptor required for image-forming vision at low light intensity. Required for photoreceptor cell viability after birth. Light-induced isomerization of the chromophore 11-cis-retinal to all-trans-retinal triggers a conformational change that activates signaling via G-proteins. Subsequent receptor phosphorylation mediates displacement of the bound G-protein alpha subunit by the arrestin SAG and terminates signaling. This chain is Rhodopsin (RHO), found in Homo sapiens (Human).